The following is a 302-amino-acid chain: Lysosomal thioesterase PPT2 (302 aa).

Positions 1–27 (MPGLWRQRLPSAWALLLLPFLPLLMPA) are cleaved as a signal peptide. An N-linked (GlcNAc...) asparagine glycan is attached at Asn60. 2 disulfide bridges follow: Cys109/Cys117 and Cys165/Cys176. The Nucleophile role is filled by Ser111. 2 N-linked (GlcNAc...) asparagine glycosylation sites follow: Asn190 and Asn206. The active site involves Asp228. Asn245 carries N-linked (GlcNAc...) asparagine glycosylation. A disulfide bridge links Cys276 with Cys296. His283 is a catalytic residue. N-linked (GlcNAc...) asparagine glycosylation occurs at Asn289.

Belongs to the palmitoyl-protein thioesterase family. As to expression, expressed throughout the brain, primarily in neurons, and at lower levels in glial cells.

It localises to the lysosome. The enzyme catalyses hexadecanoyl-CoA + H2O = hexadecanoate + CoA + H(+). It catalyses the reaction S-hexadecanoyl-N-acetylcysteamine + H2O = N-acetylcysteamine + hexadecanoate + H(+). Functionally, catalyzes the cleavage of thioester bonds from S-palmitoyl-CoA or S-palmitoyl-N-acetylcysteamine (unbranched structures) but does not have activity against palmitoylcysteine or palmitoylated proteins, branched structures or bulky head groups. Conversely, hydrolyzes both long and short chain fatty acyl-CoA substrate. The polypeptide is Lysosomal thioesterase PPT2 (Ppt2) (Mus musculus (Mouse)).